A 511-amino-acid chain; its full sequence is Myrosinase 4 (511 aa).

The signal sequence occupies residues 1-23 (MAIPKAHYSLAVLVLLFVVVSSS). Disulfide bonds link Cys31–Cys450, Cys39–Cys445, and Cys230–Cys233. N-linked (GlcNAc...) asparagine glycosylation is found at Asn46 and Asn53. Residues Gln64, His165, and 210 to 211 (NQ) each bind a beta-D-glucoside. Positions 351 and 418 each coordinate a beta-D-glucoside. Glu418 serves as the catalytic Nucleophile. Asn428 carries N-linked (GlcNAc...) asparagine glycosylation. Residues Trp467, 474-475 (EF), and Phe483 each bind a beta-D-glucoside. N-linked (GlcNAc...) asparagine glycosylation occurs at Asn489.

The protein belongs to the glycosyl hydrolase 1 family. In terms of tissue distribution, specifically expressed in roots.

The enzyme catalyses a thioglucoside + H2O = a sugar + a thiol.. The catalysed reaction is Hydrolysis of terminal, non-reducing beta-D-glucosyl residues with release of beta-D-glucose.. In terms of biological role, hydrolyzes sinigrin and, with lower efficiency, p-nitrophenyl beta-D-glucoside. The chain is Myrosinase 4 from Arabidopsis thaliana (Mouse-ear cress).